Here is a 308-residue protein sequence, read N- to C-terminus: Protoheme IX farnesyltransferase (308 aa).

The next 9 helical transmembrane spans lie at 31–51 (VGIV…AFYF), 60–80 (LDIV…SCVI), 110–130 (ALWF…MTNL), 131–151 (TAAG…TMWS), 157–177 (VNTI…WTAV), 185–205 (AWVL…ALAI), 232–252 (IIIW…LGLP), 253–273 (IVIL…VGYR), and 285–305 (FVYS…FTLF).

The protein belongs to the UbiA prenyltransferase family. Protoheme IX farnesyltransferase subfamily. Interacts with CtaA.

It is found in the cell membrane. It catalyses the reaction heme b + (2E,6E)-farnesyl diphosphate + H2O = Fe(II)-heme o + diphosphate. Its pathway is porphyrin-containing compound metabolism; heme O biosynthesis; heme O from protoheme: step 1/1. Functionally, converts heme B (protoheme IX) to heme O by substitution of the vinyl group on carbon 2 of heme B porphyrin ring with a hydroxyethyl farnesyl side group. This is Protoheme IX farnesyltransferase from Bacillus licheniformis (strain ATCC 14580 / DSM 13 / JCM 2505 / CCUG 7422 / NBRC 12200 / NCIMB 9375 / NCTC 10341 / NRRL NRS-1264 / Gibson 46).